A 104-amino-acid chain; its full sequence is N(4)-acetylcytidine amidohydrolase (104 aa).

Positions 7 to 93 constitute an ASCH domain; that stretch reads MTFFSRFEAD…EVIQEIYPGI (87 aa). Catalysis depends on K22, which acts as the Proton acceptor. Residue T25 is the Nucleophile of the active site. E75 (proton donor) is an active-site residue.

The protein belongs to the N(4)-acetylcytidine amidohydrolase family.

The catalysed reaction is N(4)-acetylcytidine + H2O = cytidine + acetate + H(+). The enzyme catalyses N(4)-acetyl-2'-deoxycytidine + H2O = 2'-deoxycytidine + acetate + H(+). It carries out the reaction N(4)-acetylcytosine + H2O = cytosine + acetate + H(+). Its function is as follows. Catalyzes the hydrolysis of N(4)-acetylcytidine (ac4C). The polypeptide is N(4)-acetylcytidine amidohydrolase (Vibrio vulnificus (strain CMCP6)).